A 782-amino-acid chain; its full sequence is MFPPSGSTGLIPPSHFQARPLSTLPRMAPTWLSDIPLVQPPGHQDVSERQLDTQRPQVTMWERDVSSDRQEPGRRGRSWGLEGSQALSQQAEVIARQLQELRRLEEEVRLLRETSLQQKMRLEAQAMELEALARAEKAGRAEAEGLRAALAGAEVVRKNLEEGSQRELEEVQRLHQEQLSSLTQAHKEALSSLTSKAEGLEKSLSSLETRRAGEAKELAEAQREAELLRKQLSKTQEDLEAQVTLVENLRKYVGEQVPSEVHSQTWELERQKLLETMQHLQEDRDSLQATAELLQVRVQSLTHILALQEEELTRKVQPSDSLEPEFTRKCQSLLNRWREKVFALMVQLKAQELEHSDSVKQLKGQVASLQEKVTSQSQEQAILQQSLQDKAAEVEVERMGAKGLQLELSRAQEARCRWQQQTASAEEQLRLVVNAVSSSQIWLETTMAKVEGAAAQLPSLNNRLSYAVRKVHTIRGLIAQKLALAQLRQESCPLPPPVTDVSLELQQLREERNRLDAELQLSARLIQQEVGRAREQGEAERQQLSKVAQQLEQELQQTQESLASLGLQLEVARQGQQESTEEAASLRQELTQQQELYGQALQEKVAEVETRLREQLSDTERRLNEARREHAKAVVSLRQIQRRAAQEKERSQELRRLQEEARKEEGQRLARRLQELERDKNLMLATLQQEGLLSRYKQQRLLTVLPSLLDKKKSVVSSPRPPECSASASVAAAVPTRESIKGSLSVLLDDLQGLSEAISKEEAVCQGDNLDRCSSSNPQMSS.

Composition is skewed to basic and acidic residues over residues Glu62–Arg74 and Glu208–Leu218. Disordered stretches follow at residues Glu62–Glu82 and Ala185–Leu218. Coiled-coil stretches lie at residues Glu82–Arg314, Leu344–Arg398, and Val498–Gly691.

It is found in the cytoplasm. The protein resides in the nucleus. In terms of biological role, may be a regulator of keratinocyte proliferation or differentiation. This Gorilla gorilla gorilla (Western lowland gorilla) protein is Coiled-coil alpha-helical rod protein 1 (CCHCR1).